A 466-amino-acid chain; its full sequence is Cell division protein FtsP (466 aa).

Residues M1–A28 constitute a signal peptide (tat-type signal).

The protein belongs to the FtsP family. Post-translationally, predicted to be exported by the Tat system. The position of the signal peptide cleavage has not been experimentally proven.

The protein localises to the periplasm. Cell division protein that is required for growth during stress conditions. May be involved in protecting or stabilizing the divisomal assembly under conditions of stress. The chain is Cell division protein FtsP from Gallibacterium anatis (strain UMN179) (Pasteurella anatis).